A 152-amino-acid polypeptide reads, in one-letter code: Probable prefoldin subunit 5 (152 aa).

It belongs to the prefoldin subunit alpha family. As to quaternary structure, heterohexamer of two PFD-alpha type and four PFD-beta type subunits.

Binds specifically to cytosolic chaperonin (c-CPN) and transfers target proteins to it. Binds to nascent polypeptide chain and promotes folding in an environment in which there are many competing pathways for nonnative proteins. The polypeptide is Probable prefoldin subunit 5 (pfd-5) (Caenorhabditis elegans).